Here is a 763-residue protein sequence, read N- to C-terminus: Phosphoglycerol transferase I (763 aa).

Helical transmembrane passes span 1-21 (MSEL…AWKA), 26-46 (WWFA…ITLF), 77-97 (ILPG…LGWI), and 108-128 (FGYS…SPAF).

It belongs to the OpgB family.

The protein localises to the cell inner membrane. It carries out the reaction a phosphatidylglycerol + a membrane-derived-oligosaccharide D-glucose = a 1,2-diacyl-sn-glycerol + a membrane-derived-oligosaccharide 6-(glycerophospho)-D-glucose.. It functions in the pathway glycan metabolism; osmoregulated periplasmic glucan (OPG) biosynthesis. Its function is as follows. Transfers a phosphoglycerol residue from phosphatidylglycerol to the membrane-bound nascent glucan backbones. The polypeptide is Phosphoglycerol transferase I (Escherichia coli (strain SE11)).